We begin with the raw amino-acid sequence, 274 residues long: Nitrogenase iron protein (274 aa).

ATP is bound at residue 8–15 (GKGGIGKS). Cys-94 contacts [4Fe-4S] cluster. At Arg-97 the chain carries ADP-ribosylarginine; by dinitrogenase reductase ADP-ribosyltransferase. Position 131 (Cys-131) interacts with [4Fe-4S] cluster.

It belongs to the NifH/BchL/ChlL family. As to quaternary structure, homodimer. [4Fe-4S] cluster serves as cofactor. The reversible ADP-ribosylation of Arg-97 inactivates the nitrogenase reductase and regulates nitrogenase activity.

It catalyses the reaction N2 + 8 reduced [2Fe-2S]-[ferredoxin] + 16 ATP + 16 H2O = H2 + 8 oxidized [2Fe-2S]-[ferredoxin] + 2 NH4(+) + 16 ADP + 16 phosphate + 6 H(+). Functionally, the key enzymatic reactions in nitrogen fixation are catalyzed by the nitrogenase complex, which has 2 components: the iron protein and the molybdenum-iron protein. The chain is Nitrogenase iron protein from Chlorobium phaeobacteroides (strain DSM 266 / SMG 266 / 2430).